Reading from the N-terminus, the 32-residue chain is Parigidin-br1 (32 aa).

The segment at residues 1-32 (GGSVPCGESCVFIPCITSLAGCSCKNKVCYYD) is a cross-link (cyclopeptide (Gly-Asp)). Disulfide bonds link Cys6–Cys22, Cys10–Cys24, and Cys15–Cys29.

Post-translationally, this is a cyclic peptide. As to expression, expressed in leaves, flowers, peduncles and seeds (at protein level).

In terms of biological role, probably participates in a plant defense mechanism. Reduces growth of and increases mortality in larvae of D.saccharalis. Kills cultured SF-9 cells of S.frugiperda probably by disrupting plasma membranes. Has hemolytic activity against human erythrocytes. Has no antibacterial activity against E.coli strain ATCC 8739 and S.aureus strain ATCC 25923. The polypeptide is Parigidin-br1 (Palicourea rigida).